Here is a 95-residue protein sequence, read N- to C-terminus: Aspartyl/glutamyl-tRNA(Asn/Gln) amidotransferase subunit C (95 aa).

The protein belongs to the GatC family. In terms of assembly, heterotrimer of A, B and C subunits.

The enzyme catalyses L-glutamyl-tRNA(Gln) + L-glutamine + ATP + H2O = L-glutaminyl-tRNA(Gln) + L-glutamate + ADP + phosphate + H(+). The catalysed reaction is L-aspartyl-tRNA(Asn) + L-glutamine + ATP + H2O = L-asparaginyl-tRNA(Asn) + L-glutamate + ADP + phosphate + 2 H(+). In terms of biological role, allows the formation of correctly charged Asn-tRNA(Asn) or Gln-tRNA(Gln) through the transamidation of misacylated Asp-tRNA(Asn) or Glu-tRNA(Gln) in organisms which lack either or both of asparaginyl-tRNA or glutaminyl-tRNA synthetases. The reaction takes place in the presence of glutamine and ATP through an activated phospho-Asp-tRNA(Asn) or phospho-Glu-tRNA(Gln). This is Aspartyl/glutamyl-tRNA(Asn/Gln) amidotransferase subunit C from Nitrobacter hamburgensis (strain DSM 10229 / NCIMB 13809 / X14).